A 1105-amino-acid polypeptide reads, in one-letter code: Pheromone-regulated membrane protein 10 (1105 aa).

Over residues 1–11 the composition is skewed to polar residues; the sequence is MSDNRPTYDTS. Disordered regions lie at residues 1 to 22, 36 to 55, 65 to 123, 151 to 278, 385 to 473, and 520 to 656; these read MSDN…NHFH, RKQN…TASN, GSNH…FYGD, IKPK…GGGL, AGAS…FLRG, and EQKS…LRHK. A compositionally biased stretch (low complexity) spans 67 to 82; the sequence is NHKFGNSINNNNNNAN. Positions 85–106 are enriched in polar residues; that stretch reads LGSSSAGTNRRSLISPTSSTHV. The segment covering 162–178 has biased composition (acidic residues); the sequence is DSSDDDGNNLDEVEDET. The segment covering 185-197 has biased composition (polar residues); the sequence is LNQNHPPQQYYET. Acidic residues predominate over residues 198–210; that stretch reads DSSDEDEEDDDEV. A compositionally biased stretch (polar residues) spans 390–413; it reads LDHSQQSSAAPSTEITPSQSPNQH. Over residues 417 to 439 the composition is skewed to low complexity; that stretch reads EKSNNNENNQQSTTVESSSSTSS. The span at 446 to 459 shows a compositional bias: basic and acidic residues; that stretch reads LARRRASEERKKAE. Composition is skewed to polar residues over residues 520–539, 592–606, and 624–633; these read EQKS…GTAL, RTNT…NSEE, and MNANLPSFQN. 10 helical membrane-spanning segments follow: residues 782–802, 809–829, 835–855, 860–880, 903–923, 938–958, 963–983, 986–1006, 1015–1035, and 1075–1095; these read PPWL…PFAF, LPIS…VSSI, SVFE…IGSI, LFCF…GYII, VIYS…YGWI, AIDE…LGLI, WSQV…SFFA, HFST…GVLG, GMAV…GIAS, and VEVS…IYPF.

Belongs to the ThrE exporter (TC 2.A.79) family.

The protein resides in the membrane. The protein is Pheromone-regulated membrane protein 10 (PRM10) of Candida albicans (strain SC5314 / ATCC MYA-2876) (Yeast).